Consider the following 356-residue polypeptide: Cyanuric acid amidohydrolase (356 aa).

The tract at residues 1–99 (MPIAKVHRIA…FLVFERAEGN (99 aa)) is RU A. Residues R52 and 79-80 (SG) contribute to the substrate site. Positions 106-243 (ALAIGRAHTP…HEIVVLGMSE (138 aa)) are RU B. Residue K156 is part of the active site. Substrate is bound by residues R188 and 226 to 227 (SS). S226 (nucleophile) is an active-site residue. The RU C stretch occupies residues 249 to 356 (LAIAHGVMAD…VAVIAARTMG (108 aa)). Position 287 (E287) interacts with Mg(2+). Substrate contacts are provided by residues R314 and 333 to 334 (SG). 5 residues coordinate Mg(2+): G336, Q339, G340, P341, and G344.

This sequence belongs to the cyclic amide hydrolase (CyAH) family. Homotetramer.

It carries out the reaction cyanurate + H2O = 1-carboxybiuret + H(+). The protein operates within xenobiotic degradation; atrazine degradation; biuret from cyanurate: step 1/1. With respect to regulation, inhibited by barbituric acid. Its function is as follows. Responsible for the hydrolysis of cyanuric acid, an intermediate formed during catabolism of s-triazine based compounds in herbicides such as atrazine and polymers such as melamine. Catalyzes the hydrolytic opening of the s-triazine ring of cyanuric acid (2,4,6-trihydroxy-s-triazine) to yield carbon dioxide and carboxybiuret, which spontaneously decarboxylates to biuret. The chain is Cyanuric acid amidohydrolase from Azorhizobium caulinodans (strain ATCC 43989 / DSM 5975 / JCM 20966 / LMG 6465 / NBRC 14845 / NCIMB 13405 / ORS 571).